The chain runs to 398 residues: Meiosis-specific protein SPO11 (398 aa).

The Topo IIA-type catalytic domain maps to 40-175 (CSNADVLAHI…LNIIPAQKGL (136 aa)). The active-site O-(5'-phospho-DNA)-tyrosine intermediate is the Tyr-135. Glu-233 and Asp-288 together coordinate Mg(2+).

It belongs to the TOP6A family. Requires Mg(2+) as cofactor.

It is found in the nucleus. It localises to the chromosome. It catalyses the reaction ATP-dependent breakage, passage and rejoining of double-stranded DNA.. In terms of biological role, required for meiotic recombination. Mediates DNA cleavage that forms the double-strand breaks (DSB) that initiate meiotic recombination. The action of SPO11 is important in setting off a regulatory chain of events encompassing 5' to 3' resection. When there are no SPO11-DSBs, resection of a site specific VDE-DSB takes place but it is faster than in wild-type meiosis and increases the risk of uncovering flanking homology. In Saccharomyces cerevisiae (strain ATCC 204508 / S288c) (Baker's yeast), this protein is Meiosis-specific protein SPO11 (SPO11).